We begin with the raw amino-acid sequence, 227 residues long: Ras-related protein Rab-3C (227 aa).

Residues Ser39, Gly42, Lys43, Thr44, Ser45, Thr56, Ser57, Ser61, and Thr62 each coordinate GTP. Thr44 provides a ligand contact to Mg(2+). The Switch 1 signature appears at 53 to 66 (DSFTSAFVSTVGID). Positions 62 and 85 each coordinate Mg(2+). Residue Thr86 is modified to Phosphothreonine. A Switch 2 motif is present at residues 86 to 104 (TAGQERYRTITTAYYRGAM). GTP contacts are provided by Gly88, Asn143, Lys144, Asp146, Ala174, and Lys175. Residues Ser196 and Ser198 each carry the phosphoserine modification. Thr206 is subject to Phosphothreonine. S-geranylgeranyl cysteine attachment occurs at residues Cys225 and Cys227. Cys227 carries the cysteine methyl ester modification.

This sequence belongs to the small GTPase superfamily. Rab family. As to quaternary structure, interacts with RIMS1, RIMS2, RPH3A and RPH3AL. The GTP-bound form interacts with REP15. Interacts with GDI2, CHM and CHML; phosphorylation at Thr-86 disrupts these interactions. Interacts with MADD (via uDENN domain); the GTP-bound form is preferred for interaction. Mg(2+) is required as a cofactor. Post-translationally, phosphorylation of Thr-86 in the switch II region by LRRK2 prevents the association of RAB regulatory proteins, including CHM, CHML and RAB GDP dissociation inhibitor GDI2.

Its subcellular location is the cell membrane. The catalysed reaction is GTP + H2O = GDP + phosphate + H(+). Its activity is regulated as follows. Regulated by guanine nucleotide exchange factors (GEFs) which promote the exchange of bound GDP for free GTP. Regulated by GTPase activating proteins (GAPs) which increase the GTP hydrolysis activity. Inhibited by GDP dissociation inhibitors (GDIs) which prevent Rab-GDP dissociation. The small GTPases Rab are key regulators of intracellular membrane trafficking, from the formation of transport vesicles to their fusion with membranes. Rabs cycle between an inactive GDP-bound form and an active GTP-bound form that is able to recruit to membranes different sets of downstream effectors directly responsible for vesicle formation, movement, tethering and fusion. This is Ras-related protein Rab-3C (RAB3C) from Bos taurus (Bovine).